A 380-amino-acid chain; its full sequence is tRNA(Met) cytidine acetate ligase (380 aa).

Residues 7–20, G100, N153, and R178 contribute to the ATP site; that span reads ITEY…HLYH.

Belongs to the TmcAL family.

The protein resides in the cytoplasm. The catalysed reaction is cytidine(34) in elongator tRNA(Met) + acetate + ATP = N(4)-acetylcytidine(34) in elongator tRNA(Met) + AMP + diphosphate. Functionally, catalyzes the formation of N(4)-acetylcytidine (ac(4)C) at the wobble position of elongator tRNA(Met), using acetate and ATP as substrates. First activates an acetate ion to form acetyladenylate (Ac-AMP) and then transfers the acetyl group to tRNA to form ac(4)C34. In Staphylococcus haemolyticus (strain JCSC1435), this protein is tRNA(Met) cytidine acetate ligase.